Consider the following 138-residue polypeptide: Acidic phospholipase A2 pgPLA 1b/pgPLA 2b (138 aa).

The signal sequence occupies residues 1–16; that stretch reads MRTLWIMAVLLVGVKG. Cystine bridges form between C42–C131, C44–C60, C59–C111, C65–C138, C66–C104, C73–C97, and C91–C102. Ca(2+) contacts are provided by Y43, G45, and G47. H63 is an active-site residue. Residue D64 coordinates Ca(2+). D105 is a catalytic residue.

Belongs to the phospholipase A2 family. Group II subfamily. D49 sub-subfamily. The cofactor is Ca(2+). As to expression, expressed by the venom gland.

The protein localises to the secreted. The catalysed reaction is a 1,2-diacyl-sn-glycero-3-phosphocholine + H2O = a 1-acyl-sn-glycero-3-phosphocholine + a fatty acid + H(+). Functionally, PLA2 catalyzes the calcium-dependent hydrolysis of the 2-acyl groups in 3-sn-phosphoglycerides. The protein is Acidic phospholipase A2 pgPLA 1b/pgPLA 2b of Protobothrops flavoviridis (Habu).